An 858-amino-acid chain; its full sequence is Bifunctional uridylyltransferase/uridylyl-removing enzyme (858 aa).

The tract at residues 1–324 is uridylyltransferase; the sequence is MSAHAAPSPE…PATSGITRVL (324 aa). The interval 325–681 is uridylyl-removing; it reads SADRFVEKQG…ARPSPIGDAL (357 aa). Residues 443–565 form the HD domain; sequence VDQHILMVLR…VGNERYLTAL (123 aa). ACT domains lie at 682–763 and 790–858; these read QVLV…PSKG and ILSV…AIAV.

Belongs to the GlnD family. It depends on Mg(2+) as a cofactor.

The catalysed reaction is [protein-PII]-L-tyrosine + UTP = [protein-PII]-uridylyl-L-tyrosine + diphosphate. The enzyme catalyses [protein-PII]-uridylyl-L-tyrosine + H2O = [protein-PII]-L-tyrosine + UMP + H(+). Its activity is regulated as follows. Uridylyltransferase (UTase) activity is inhibited by glutamine, while glutamine activates uridylyl-removing (UR) activity. Functionally, modifies, by uridylylation and deuridylylation, the PII regulatory proteins (GlnB and homologs), in response to the nitrogen status of the cell that GlnD senses through the glutamine level. Under low glutamine levels, catalyzes the conversion of the PII proteins and UTP to PII-UMP and PPi, while under higher glutamine levels, GlnD hydrolyzes PII-UMP to PII and UMP (deuridylylation). Thus, controls uridylylation state and activity of the PII proteins, and plays an important role in the regulation of nitrogen assimilation and metabolism. The sequence is that of Bifunctional uridylyltransferase/uridylyl-removing enzyme from Burkholderia orbicola (strain AU 1054).